We begin with the raw amino-acid sequence, 100 residues long: Urease subunit gamma (100 aa).

This sequence belongs to the urease gamma subunit family. As to quaternary structure, heterotrimer of UreA (gamma), UreB (beta) and UreC (alpha) subunits. Three heterotrimers associate to form the active enzyme.

It localises to the cytoplasm. It carries out the reaction urea + 2 H2O + H(+) = hydrogencarbonate + 2 NH4(+). Its pathway is nitrogen metabolism; urea degradation; CO(2) and NH(3) from urea (urease route): step 1/1. In Cupriavidus necator (strain ATCC 17699 / DSM 428 / KCTC 22496 / NCIMB 10442 / H16 / Stanier 337) (Ralstonia eutropha), this protein is Urease subunit gamma.